We begin with the raw amino-acid sequence, 415 residues long: Histidine--tRNA ligase (415 aa).

Belongs to the class-II aminoacyl-tRNA synthetase family. Homodimer.

The protein resides in the cytoplasm. The catalysed reaction is tRNA(His) + L-histidine + ATP = L-histidyl-tRNA(His) + AMP + diphosphate + H(+). The polypeptide is Histidine--tRNA ligase (Clostridium perfringens (strain SM101 / Type A)).